A 338-amino-acid polypeptide reads, in one-letter code: MKRMIALDGAQGEGGGQILRSALSLSMITGQPFTITSIRAGRAKPGLLRQHLTAVKAAAEICRATVEGAELGSQRLVFRPGAVRGGEYRFAIGSAGSCTLVLQTVLPALWFADGPSRVEVSGGTDNPSAPPADFIRRVLEPLLAKIGIHQQTTLLRHGFYPAGGGVVATEVSPVASFNTLQLGERGNIVQMRGEVLLAGVPRHVAEREIATLAGSFSLHEQNIHNLPRDQGPGNTVSLEVESENITERFFVVGEKRVSAEVVAAQLVKEVKRYLASPAAVGEYLADQLVLPMALAGAGEFTVAHPSCHLLTNIAVVERFLPVRFGLIEIDGVTRVSIE.

Residues Gln-103 and Tyr-283–Gln-287 each bind ATP. The active-site Tele-AMP-histidine intermediate is His-308.

This sequence belongs to the RNA 3'-terminal cyclase family. Type 1 subfamily.

It is found in the cytoplasm. The catalysed reaction is a 3'-end 3'-phospho-ribonucleotide-RNA + ATP = a 3'-end 2',3'-cyclophospho-ribonucleotide-RNA + AMP + diphosphate. In terms of biological role, catalyzes the conversion of 3'-phosphate to a 2',3'-cyclic phosphodiester at the end of RNA. The mechanism of action of the enzyme occurs in 3 steps: (A) adenylation of the enzyme by ATP; (B) transfer of adenylate to an RNA-N3'P to produce RNA-N3'PP5'A; (C) and attack of the adjacent 2'-hydroxyl on the 3'-phosphorus in the diester linkage to produce the cyclic end product. The biological role of this enzyme is unknown but it is likely to function in some aspects of cellular RNA processing. This is RNA 3'-terminal phosphate cyclase from Shigella boydii serotype 4 (strain Sb227).